The primary structure comprises 58 residues: Large ribosomal subunit protein uL30 (58 aa).

This sequence belongs to the universal ribosomal protein uL30 family. In terms of assembly, part of the 50S ribosomal subunit.

The polypeptide is Large ribosomal subunit protein uL30 (Pseudomonas entomophila (strain L48)).